Here is a 418-residue protein sequence, read N- to C-terminus: Voltage-gated ClC-type chloride channel ClcB (418 aa).

At 1 to 4 the chain is on the cytoplasmic side; that stretch reads MFRR. The chain crosses the membrane as a helical span at residues 5–25; sequence LLIATIVGILAAFAVAGFRHA. Residues 26–53 lie on the Periplasmic side of the membrane; the sequence is MLLLEWLFLNNDSGSLVNAATNLSPWRR. Residues 54–74 traverse the membrane as a helical segment; it reads LLTPALGGLAAGLLLMGWQKF. Residues 75–145 are Cytoplasmic-facing; sequence TQQRPHAPTD…QRFTPRQEWK (71 aa). The chain crosses the membrane as a helical span at residues 146 to 166; sequence LWIACGAAAGMAAAYRAPLAG. Topologically, residues 167–177 are periplasmic; the sequence is SLFIAEVLFGT. A helical transmembrane segment spans residues 178–200; sequence MMLASLGPVIISAVVALLISNLI. Residues 201 to 221 are Cytoplasmic-facing; that stretch reads NHSDALLYSVQLSVTVQARDY. The chain crosses the membrane as a helical span at residues 222–242; sequence ALIISTGVLAGLCGPLLLTLM. The Periplasmic segment spans residues 243–257; the sequence is NACHRGFVSLKLAPP. The helical transmembrane segment at 258–278 threads the bilayer; the sequence is WQLALGGLIVGLLSLFTPAVW. Over 279–290 the chain is Cytoplasmic; the sequence is GNGYSTVQSFLT. A helical membrane pass occupies residues 291 to 311; sequence APPLLMIIAGIFLCKLCAVLA. The Periplasmic segment spans residues 312-315; it reads SSGS. The chain crosses the membrane as a helical span at residues 316–336; that stretch reads GAPGGVFTPTLFIGLAIGMLY. Residues 337 to 351 lie on the Cytoplasmic side of the membrane; sequence GRSLGLWLPDGEEIT. The chain crosses the membrane as a helical span at residues 352–372; it reads LLLGLTGMATLLAATTHAPIM. The Periplasmic segment spans residues 373–379; that stretch reads STLMICE. Residues 380–400 form a helical membrane-spanning segment; the sequence is MTGEYQLLPGLLIACVIASVI. Over 401–418 the chain is Cytoplasmic; it reads SRTLHRDSIYRQHTAKHS.

This sequence belongs to the chloride channel (TC 2.A.49) family. ClcB subfamily.

The protein resides in the cell inner membrane. Probably acts as an electrical shunt for an outwardly-directed proton pump that is linked to amino acid decarboxylation, as part of the extreme acid resistance (XAR) response. This chain is Voltage-gated ClC-type chloride channel ClcB (clcB), found in Escherichia coli O6:H1 (strain CFT073 / ATCC 700928 / UPEC).